A 307-amino-acid polypeptide reads, in one-letter code: Oxygen-dependent coproporphyrinogen-III oxidase (307 aa).

S99 is a substrate binding site. Residues H103 and H113 each coordinate a divalent metal cation. The Proton donor role is filled by H113. 115-117 contributes to the substrate binding site; sequence NVR. Residues H152 and H182 each contribute to the a divalent metal cation site. Residues 247–282 form an important for dimerization region; it reads YVEFNLVFDRGTLFGLQSGGRTESILLSMPPTAGWR. Residue 265–267 participates in substrate binding; it reads GGR.

This sequence belongs to the aerobic coproporphyrinogen-III oxidase family. Homodimer. Requires a divalent metal cation as cofactor.

It localises to the cytoplasm. The catalysed reaction is coproporphyrinogen III + O2 + 2 H(+) = protoporphyrinogen IX + 2 CO2 + 2 H2O. It participates in porphyrin-containing compound metabolism; protoporphyrin-IX biosynthesis; protoporphyrinogen-IX from coproporphyrinogen-III (O2 route): step 1/1. Functionally, involved in the heme biosynthesis. Catalyzes the aerobic oxidative decarboxylation of propionate groups of rings A and B of coproporphyrinogen-III to yield the vinyl groups in protoporphyrinogen-IX. The sequence is that of Oxygen-dependent coproporphyrinogen-III oxidase from Burkholderia mallei (strain SAVP1).